We begin with the raw amino-acid sequence, 650 residues long: Protein kinase domain-containing protein ppk38 (650 aa).

Positions 33-315 (VTVKRYLAEG…MRNVPIHIYD (283 aa)) constitute a Protein kinase domain. Disordered regions lie at residues 344 to 442 (IHQS…PTTP), 517 to 571 (KVAA…PTNM), and 591 to 616 (RRVS…EKPM). Polar residues-rich tracts occupy residues 369 to 415 (NVNS…NFRV) and 533 to 554 (SVEN…SSNA).

The protein is Protein kinase domain-containing protein ppk38 (ppk38) of Schizosaccharomyces pombe (strain 972 / ATCC 24843) (Fission yeast).